We begin with the raw amino-acid sequence, 429 residues long: tRNA-2-methylthio-N(6)-dimethylallyladenosine synthase (429 aa).

One can recognise an MTTase N-terminal domain in the interval 2 to 115 (KLLYLQTLGC…ISEAVKTPKF (114 aa)). 6 residues coordinate [4Fe-4S] cluster: Cys-11, Cys-46, Cys-78, Cys-147, Cys-151, and Cys-154. Residues 133–365 (RGSPYKAFVN…QSRHNEILDE (233 aa)) enclose the Radical SAM core domain. In terms of domain architecture, TRAM spans 368–429 (KNQVGKIFDV…RMVLYGKITA (62 aa)).

It belongs to the methylthiotransferase family. MiaB subfamily. In terms of assembly, monomer. The cofactor is [4Fe-4S] cluster.

The protein resides in the cytoplasm. The catalysed reaction is N(6)-dimethylallyladenosine(37) in tRNA + (sulfur carrier)-SH + AH2 + 2 S-adenosyl-L-methionine = 2-methylsulfanyl-N(6)-dimethylallyladenosine(37) in tRNA + (sulfur carrier)-H + 5'-deoxyadenosine + L-methionine + A + S-adenosyl-L-homocysteine + 2 H(+). Its function is as follows. Catalyzes the methylthiolation of N6-(dimethylallyl)adenosine (i(6)A), leading to the formation of 2-methylthio-N6-(dimethylallyl)adenosine (ms(2)i(6)A) at position 37 in tRNAs that read codons beginning with uridine. The chain is tRNA-2-methylthio-N(6)-dimethylallyladenosine synthase from Campylobacter hominis (strain ATCC BAA-381 / DSM 21671 / CCUG 45161 / LMG 19568 / NCTC 13146 / CH001A).